The sequence spans 188 residues: F7-2 fimbrial protein (188 aa).

An N-terminal signal peptide occupies residues 1 to 21 (MIKSVIAGAVAMAVVSFGAYA). Cysteines 43 and 82 form a disulfide.

This sequence belongs to the fimbrial protein family.

The protein resides in the fimbrium. Functionally, fimbriae (also called pili), polar filaments radiating from the surface of the bacterium to a length of 0.5-1.5 micrometers and numbering 100-300 per cell, enable bacteria to colonize the epithelium of specific host organs. This Escherichia coli O6:H1 (strain CFT073 / ATCC 700928 / UPEC) protein is F7-2 fimbrial protein (F7-2).